The chain runs to 370 residues: Phosphate-binding protein PstS 2 (370 aa).

Positions Met-1–Ala-22 are cleaved as a signal peptide. Residue Cys-23 is the site of N-palmitoyl cysteine attachment. Residue Cys-23 is the site of S-diacylglycerol cysteine attachment. Residues Ser-54–Ala-56, Ser-84, Asp-102, and Ser-191–Thr-193 each bind phosphate.

This sequence belongs to the PstS family. The complex is composed of two ATP-binding proteins (PstB), two transmembrane proteins (PstC and PstA) and a solute-binding protein (PstS).

The protein resides in the cell membrane. Functionally, functions in inorganic phosphate uptake, although probably not the main uptake protein under phosphate starvation. Part of the ABC transporter complex PstSACB involved in phosphate import. The sequence is that of Phosphate-binding protein PstS 2 (pstS2) from Mycobacterium tuberculosis (strain ATCC 25618 / H37Rv).